Consider the following 434-residue polypeptide: Ribosomal protein uS12 methylthiotransferase RimO (434 aa).

One can recognise an MTTase N-terminal domain in the interval 2 to 112 (AKIGFVSLGC…VLEAVQEVLP (111 aa)). [4Fe-4S] cluster-binding residues include Cys-11, Cys-47, Cys-76, Cys-142, Cys-146, and Cys-149. The region spanning 128–365 (LTPRHYAYVK…LEVQARVSLR (238 aa)) is the Radical SAM core domain. In terms of domain architecture, TRAM spans 368–434 (QRFVGKTLEV…DTYDLHGVQA (67 aa)).

Belongs to the methylthiotransferase family. RimO subfamily. It depends on [4Fe-4S] cluster as a cofactor.

It is found in the cytoplasm. The enzyme catalyses L-aspartate(89)-[ribosomal protein uS12]-hydrogen + (sulfur carrier)-SH + AH2 + 2 S-adenosyl-L-methionine = 3-methylsulfanyl-L-aspartate(89)-[ribosomal protein uS12]-hydrogen + (sulfur carrier)-H + 5'-deoxyadenosine + L-methionine + A + S-adenosyl-L-homocysteine + 2 H(+). Catalyzes the methylthiolation of an aspartic acid residue of ribosomal protein uS12. The polypeptide is Ribosomal protein uS12 methylthiotransferase RimO (Thermus thermophilus (strain ATCC BAA-163 / DSM 7039 / HB27)).